The chain runs to 610 residues: DNA mismatch repair protein MutL (610 aa).

It belongs to the DNA mismatch repair MutL/HexB family.

This protein is involved in the repair of mismatches in DNA. It is required for dam-dependent methyl-directed DNA mismatch repair. May act as a 'molecular matchmaker', a protein that promotes the formation of a stable complex between two or more DNA-binding proteins in an ATP-dependent manner without itself being part of a final effector complex. This is DNA mismatch repair protein MutL from Rickettsia africae (strain ESF-5).